We begin with the raw amino-acid sequence, 286 residues long: ATP synthase gamma chain (286 aa).

Belongs to the ATPase gamma chain family. F-type ATPases have 2 components, CF(1) - the catalytic core - and CF(0) - the membrane proton channel. CF(1) has five subunits: alpha(3), beta(3), gamma(1), delta(1), epsilon(1). CF(0) has three main subunits: a, b and c.

The protein resides in the cell inner membrane. Its function is as follows. Produces ATP from ADP in the presence of a proton gradient across the membrane. The gamma chain is believed to be important in regulating ATPase activity and the flow of protons through the CF(0) complex. This chain is ATP synthase gamma chain, found in Shewanella woodyi (strain ATCC 51908 / MS32).